The sequence spans 373 residues: Dual-specificity RNA methyltransferase RlmN (373 aa).

Glu91 acts as the Proton acceptor in catalysis. Positions 97 to 339 (EDDRGTLCIS…TTVRKTRGDD (243 aa)) constitute a Radical SAM core domain. Cysteines 104 and 344 form a disulfide. [4Fe-4S] cluster is bound by residues Cys111, Cys115, and Cys118. Residues 165 to 166 (GE), Ser197, 219 to 221 (SLH), and Asn301 each bind S-adenosyl-L-methionine. Catalysis depends on Cys344, which acts as the S-methylcysteine intermediate.

Belongs to the radical SAM superfamily. RlmN family. [4Fe-4S] cluster is required as a cofactor.

It localises to the cytoplasm. The enzyme catalyses adenosine(2503) in 23S rRNA + 2 reduced [2Fe-2S]-[ferredoxin] + 2 S-adenosyl-L-methionine = 2-methyladenosine(2503) in 23S rRNA + 5'-deoxyadenosine + L-methionine + 2 oxidized [2Fe-2S]-[ferredoxin] + S-adenosyl-L-homocysteine. It carries out the reaction adenosine(37) in tRNA + 2 reduced [2Fe-2S]-[ferredoxin] + 2 S-adenosyl-L-methionine = 2-methyladenosine(37) in tRNA + 5'-deoxyadenosine + L-methionine + 2 oxidized [2Fe-2S]-[ferredoxin] + S-adenosyl-L-homocysteine. Functionally, specifically methylates position 2 of adenine 2503 in 23S rRNA and position 2 of adenine 37 in tRNAs. m2A2503 modification seems to play a crucial role in the proofreading step occurring at the peptidyl transferase center and thus would serve to optimize ribosomal fidelity. In Paracidovorax citrulli (strain AAC00-1) (Acidovorax citrulli), this protein is Dual-specificity RNA methyltransferase RlmN.